We begin with the raw amino-acid sequence, 791 residues long: MGTVGKKKDRPAHGCSTIPKLALELKQIIHSTTHPKVPAVTPLRVMMPLGKLSKGASLDELIQMCIQAFDLDGNMGQNNELLQIMLTMHGFLIPSTELLIKLRTLYQDAMQNRSFSFCLRICYFIRYWITELWVMFKMDAKLTQTMEEFQELVRSHGEELHWRLIDTAQINSRDWSRKLTQRIQSNCSKKRKVSLLFDHLEPQELAEHLTYLEFKAFRRISFSDYQNYIVNGCVKDNPTMERSIALCNGISQWVQLMVLSRPTPQLRAEVLTKFIHVAQKLHQLQNFNTLMAVIGGLCHSSISRLKDTSSHVSHDVTKVLNEMTELLSSCRNYDNYRRAYNECTNFKIPILGVHLKDLIALHEAMPDFLEESKINVPKLHSLYNHINELIQLQNIAPPLEANMDLVHLLTLSLDLYYTEDEMYELSYAREPRNYRAPPVTPSKPPVVADWASGVSPKPDPKTISKHVQRMVDSVFKNYDLDQDGYISQEEFEKIAASFPFSFCVMDKDREGLISRQEITAYFMRASSICSKLGLGFLHNFQETTYLRPTFCDNCAGFLWGVIKQGYRCKDCGMNCHKQCKELVVFECKKRSKCSMGENNTLSDAGQLEVIPAGGKGLTNDCLGADEGPYSYPNGDGDIHTEVSKDRTIMLMGSSAQKISVRLQPAVKHRATQTENETQSLCLQVPSPPRSRTPDLTSHLPISPMPSPCPSPVPTRKKAYAKWENKDSIRKARAELRGGKAGIQELEKEKVFLKEENTALKIQLKDAHRRVETLRAELRKYVLDSDTHQKGS.

Residues 49-172 (LGKLSKGASL…RLIDTAQINS (124 aa)) enclose the N-terminal Ras-GEF domain. A ras exchanger motif region; required for transforming activity region spans residues 53–106 (SKGASLDELIQMCIQAFDLDGNMGQNNELLQIMLTMHGFLIPSTELLIKLRTLY). One can recognise a Ras-GEF domain in the interval 201–432 (EPQELAEHLT…YELSYAREPR (232 aa)). EF-hand domains lie at 466-501 (HVQRMVDSVFKNYDLDQDGYISQEEFEKIAASFPFS) and 502-528 (FCVMDKDREGLISRQEITAYFMRASSI). Residues Asp479, Asp481, Asp483, Tyr485, Glu490, Asp506, Asp508, Glu510, and Glu517 each contribute to the Ca(2+) site. A Phorbol-ester/DAG-type zinc finger spans residues 537 to 587 (LHNFQETTYLRPTFCDNCAGFLWGVIKQGYRCKDCGMNCHKQCKELVVFEC). A disordered region spans residues 671-715 (TQTENETQSLCLQVPSPPRSRTPDLTSHLPISPMPSPCPSPVPTR). A compositionally biased stretch (polar residues) spans 672–681 (QTENETQSLC). Residues 702-712 (SPMPSPCPSPV) are compositionally biased toward pro residues. Residues 728-783 (IRKARAELRGGKAGIQELEKEKVFLKEENTALKIQLKDAHRRVETLRAELRKYVLD) are a coiled coil.

It belongs to the RASGRP family.

It is found in the cytoplasm. It localises to the cytosol. The protein localises to the cell membrane. Its subcellular location is the golgi apparatus membrane. The protein resides in the endoplasmic reticulum membrane. With respect to regulation, regulated by F-actin polymerization and probably by calcium. Its function is as follows. Functions as a diacylglycerol (DAG)-regulated nucleotide exchange factor specifically activating Ras through the exchange of bound GDP for GTP. This is RAS guanyl-releasing protein 1 (rasgrp1) from Xenopus laevis (African clawed frog).